Reading from the N-terminus, the 604-residue chain is Kelch-like protein 15 (604 aa).

The 68-residue stretch at 31 to 98 folds into the BTB domain; the sequence is LDVTLVIEDH…MYYGTIELSM (68 aa). In terms of domain architecture, BACK spans 133–237; that stretch reads CAEIMRLLDD…TPTSVFEKVK (105 aa). Kelch repeat units lie at residues 328–379, 381–426, 428–473, 489–542, and 544–590; these read FVFL…VIGK, IYAV…VLNN, LFIT…NKSK, KLYV…VLDK, and IMVL…VCNL.

Homodimer. Dimerization does not affect PPP2R5B-binding, but is required for its proteasomal degradation. Interacts with CUL3. Directly interacts with PPP2R5B; this interaction leads to PPP2R5B proteasomal degradation. Interacts with RBBP8/CtIP; this interaction leads to RBBP8 proteasomal degradation. Interacts with PACMP micropeptide; interaction prevents ubiquitination and degradation of RBBP8/CtIP.

The protein resides in the nucleus. Its pathway is protein modification; protein ubiquitination. Its function is as follows. Substrate-specific adapter for CUL3 E3 ubiquitin-protein ligase complex. Acts as an adapter for CUL3 to target the serine/threonine-protein phosphatase 2A (PP2A) subunit PPP2R5B for ubiquitination and subsequent proteasomal degradation, thus promoting exchange with other regulatory subunits. Acts as an adapter for CUL3 to target the DNA-end resection factor RBBP8/CtIP for ubiquitination and subsequent proteasomal degradation. Through the regulation of RBBP8/CtIP protein turnover, plays a key role in DNA damage response, favoring DNA double-strand repair through error-prone non-homologous end joining (NHEJ) over error-free, RBBP8-mediated homologous recombination (HR). This is Kelch-like protein 15 (KLHL15) from Homo sapiens (Human).